Here is an 864-residue protein sequence, read N- to C-terminus: Coiled-coil and C2 domain-containing protein 1B (864 aa).

A disordered region spans residues 82–154 (QDCMTDMTGE…VNSSVAEIQH (73 aa)). Composition is skewed to acidic residues over residues 89–104 (TGED…EELL) and 111–129 (VGEE…EESE). Positions 91–118 (EDDDDDLEEDEELLAELQDVVGEEEEVE) form a coiled coil. Residues 142-154 (EQQVNSSVAEIQH) are compositionally biased toward polar residues. The stretch at 162-209 (GMLQVLEERIGNYKEAISNAKLSNESAKARRYERGLKTLESMLSAARQ) forms a coiled coil. The tract at residues 218-249 (IPPPVACGKPAVSPTTDVPTTDTSKQGLGDLN) is disordered. Residues 229-241 (VSPTTDVPTTDTS) show a composition bias toward low complexity. Residues 385–412 (VGSLLQALQQRMEKYKSAAQQAKSSGDD) adopt a coiled-coil conformation. 2 disordered regions span residues 441-463 (AELP…EEGS) and 478-502 (AGED…PTQL). Positions 444–453 (PVPPGFPPLP) are enriched in pro residues. Coiled coils occupy residues 464-488 (VEKA…DEDE) and 535-564 (PAVQ…KNDL). One can recognise a C2 domain in the interval 685–820 (HFEDKTLKIV…ETQCEIREIV (136 aa)).

The protein belongs to the CC2D1 family.

This is Coiled-coil and C2 domain-containing protein 1B (cc2d1b) from Xenopus laevis (African clawed frog).